A 49-amino-acid polypeptide reads, in one-letter code: Large ribosomal subunit protein bL33B (49 aa).

The protein belongs to the bacterial ribosomal protein bL33 family.

The sequence is that of Large ribosomal subunit protein bL33B from Limosilactobacillus fermentum (strain NBRC 3956 / LMG 18251) (Lactobacillus fermentum).